A 453-amino-acid polypeptide reads, in one-letter code: Pup--protein ligase (453 aa).

Position 9 (glutamate 9) interacts with Mg(2+). Position 53 (arginine 53) interacts with ATP. Tyrosine 55 provides a ligand contact to Mg(2+). The Proton acceptor role is filled by aspartate 57. Glutamate 63 is a binding site for Mg(2+). The ATP site is built by threonine 66 and tryptophan 420.

The protein belongs to the Pup ligase/Pup deamidase family. Pup-conjugating enzyme subfamily.

It catalyses the reaction ATP + [prokaryotic ubiquitin-like protein]-L-glutamate + [protein]-L-lysine = ADP + phosphate + N(6)-([prokaryotic ubiquitin-like protein]-gamma-L-glutamyl)-[protein]-L-lysine.. It functions in the pathway protein degradation; proteasomal Pup-dependent pathway. Its pathway is protein modification; protein pupylation. Functionally, catalyzes the covalent attachment of the prokaryotic ubiquitin-like protein modifier Pup to the proteasomal substrate proteins, thereby targeting them for proteasomal degradation. This tagging system is termed pupylation. The ligation reaction involves the side-chain carboxylate of the C-terminal glutamate of Pup and the side-chain amino group of a substrate lysine. The chain is Pup--protein ligase from Streptomyces coelicolor (strain ATCC BAA-471 / A3(2) / M145).